The sequence spans 155 residues: MAAGSITTLPALPEDGGSSAFPPGHFKDPKRLYCKNGGFFLRIHPDGRVDGVREKSDPHIKLQLQAEERGVVSIKGVCANRYLAMKEDGRLLASKCVTDECFFFERLESNNYNTYRSRKYSSWYVALKRTGQYKLGPKTGPGQKAILFLPMSAKS.

The propeptide occupies M1–L9. The disordered stretch occupies residues M1–A20. Residue N36 participates in heparin binding. The Cell attachment site; atypical motif lies at D46–R48. Y82 carries the post-translational modification Phosphotyrosine; by TEC. The Cell attachment site; atypical signature appears at D88–R90. K95 is covalently cross-linked (Glycyl lysine isopeptide (Lys-Gly) (interchain with G-Cter in SUMO1)). Residues K128 to K144 are heparin-binding.

It belongs to the heparin-binding growth factors family. In terms of assembly, monomer. Homodimer. Interacts with FGFR1, FGFR2, FGFR3 and FGFR4. Affinity between fibroblast growth factors (FGFs) and their receptors is increased by heparan sulfate glycosaminoglycans that function as coreceptors. Interacts with CSPG4, FGFBP1 and TEC. Found in a complex with FGFBP1, FGF1 and FGF2. Interacts with FGFBP3. Interacts with integrin ITGAV:ITGB3; the interaction is required for FGF2 signaling. Interacts with SNORC (via the extracellular domain). Interacts with glypican GPC3. In terms of processing, phosphorylation at Tyr-82 regulates FGF2 unconventional secretion.

The protein resides in the secreted. It is found in the nucleus. Functionally, acts as a ligand for FGFR1, FGFR2, FGFR3 and FGFR4. Also acts as an integrin ligand which is required for FGF2 signaling. Binds to integrin ITGAV:ITGB3. Plays an important role in the regulation of cell survival, cell division, cell differentiation and cell migration. Functions as a potent mitogen in vitro. Can induce angiogenesis. Mediates phosphorylation of ERK1/2 and thereby promotes retinal lens fiber differentiation. The sequence is that of Fibroblast growth factor 2 (FGF2) from Ovis aries (Sheep).